Reading from the N-terminus, the 484-residue chain is Adenylosuccinate lyase (484 aa).

A2 carries the N-acetylalanine modification. Substrate contacts are provided by residues 20–21, 85–87, and 111–112; these read RY, RHD, and TS. K147 is modified (N6-acetyllysine). H159 functions as the Proton donor/acceptor in the catalytic mechanism. Q241 is a binding site for substrate. Residue S289 is the Proton donor/acceptor of the active site. At K295 the chain carries N6-acetyllysine. R303, R329, S334, and R338 together coordinate substrate. A Glycyl lysine isopeptide (Lys-Gly) (interchain with G-Cter in SUMO1) cross-link involves residue K415.

Belongs to the lyase 1 family. Adenylosuccinate lyase subfamily. In terms of assembly, homotetramer. Residues from neighboring subunits contribute catalytic and substrate-binding residues to each active site. Ubiquitously expressed. Both isoforms are produced by all tissues. Isoform 2 is 10-fold less abundant than isoform 1.

The catalysed reaction is N(6)-(1,2-dicarboxyethyl)-AMP = fumarate + AMP. The enzyme catalyses (2S)-2-[5-amino-1-(5-phospho-beta-D-ribosyl)imidazole-4-carboxamido]succinate = 5-amino-1-(5-phospho-beta-D-ribosyl)imidazole-4-carboxamide + fumarate. It participates in purine metabolism; AMP biosynthesis via de novo pathway; AMP from IMP: step 2/2. Its pathway is purine metabolism; IMP biosynthesis via de novo pathway; 5-amino-1-(5-phospho-D-ribosyl)imidazole-4-carboxamide from 5-amino-1-(5-phospho-D-ribosyl)imidazole-4-carboxylate: step 2/2. Its activity is regulated as follows. The enzyme reaction kinetics indicate cooperativity between subunits. In terms of biological role, catalyzes two non-sequential steps in de novo AMP synthesis: converts (S)-2-(5-amino-1-(5-phospho-D-ribosyl)imidazole-4-carboxamido)succinate (SAICAR) to fumarate plus 5-amino-1-(5-phospho-D-ribosyl)imidazole-4-carboxamide, and thereby also contributes to de novo IMP synthesis, and converts succinyladenosine monophosphate (SAMP) to AMP and fumarate. The polypeptide is Adenylosuccinate lyase (ADSL) (Homo sapiens (Human)).